The following is a 126-amino-acid chain: Aspartate 1-decarboxylase 2 (126 aa).

The active-site Schiff-base intermediate with substrate; via pyruvic acid is the Ser25. Position 25 is a pyruvic acid (Ser) (Ser25). Thr57 is a binding site for substrate. Tyr58 (proton donor) is an active-site residue. Residue Gly73 to Ala75 coordinates substrate.

The protein belongs to the PanD family. As to quaternary structure, heterooctamer of four alpha and four beta subunits. Pyruvate is required as a cofactor. In terms of processing, is synthesized initially as an inactive proenzyme, which is activated by self-cleavage at a specific serine bond to produce a beta-subunit with a hydroxyl group at its C-terminus and an alpha-subunit with a pyruvoyl group at its N-terminus.

Its subcellular location is the cytoplasm. The enzyme catalyses L-aspartate + H(+) = beta-alanine + CO2. It functions in the pathway cofactor biosynthesis; (R)-pantothenate biosynthesis; beta-alanine from L-aspartate: step 1/1. Functionally, catalyzes the pyruvoyl-dependent decarboxylation of aspartate to produce beta-alanine. In Polaromonas sp. (strain JS666 / ATCC BAA-500), this protein is Aspartate 1-decarboxylase 2.